The chain runs to 133 residues: Small ribosomal subunit protein uS8 (133 aa).

This sequence belongs to the universal ribosomal protein uS8 family. As to quaternary structure, part of the 30S ribosomal subunit. Contacts proteins S5 and S12.

One of the primary rRNA binding proteins, it binds directly to 16S rRNA central domain where it helps coordinate assembly of the platform of the 30S subunit. In Nostoc punctiforme (strain ATCC 29133 / PCC 73102), this protein is Small ribosomal subunit protein uS8.